We begin with the raw amino-acid sequence, 312 residues long: Ribosomal RNA small subunit methyltransferase H (312 aa).

Residues 34 to 36 (GGH), Asp54, Leu83, Asp99, and Gln106 each bind S-adenosyl-L-methionine.

It belongs to the methyltransferase superfamily. RsmH family.

It localises to the cytoplasm. It carries out the reaction cytidine(1402) in 16S rRNA + S-adenosyl-L-methionine = N(4)-methylcytidine(1402) in 16S rRNA + S-adenosyl-L-homocysteine + H(+). Its function is as follows. Specifically methylates the N4 position of cytidine in position 1402 (C1402) of 16S rRNA. In Rubrobacter xylanophilus (strain DSM 9941 / JCM 11954 / NBRC 16129 / PRD-1), this protein is Ribosomal RNA small subunit methyltransferase H.